We begin with the raw amino-acid sequence, 156 residues long: Transcriptional repressor NrdR (156 aa).

A zinc finger lies at 3–34 (CPFCQHGHSRVIDSRVIEAGSAIRRRRECSQC). The 91-residue stretch at 46–136 (LLVLKRNGVT…VYKSFESADD (91 aa)) folds into the ATP-cone domain.

This sequence belongs to the NrdR family. Zn(2+) serves as cofactor.

Its function is as follows. Negatively regulates transcription of bacterial ribonucleotide reductase nrd genes and operons by binding to NrdR-boxes. The protein is Transcriptional repressor NrdR of Corynebacterium efficiens (strain DSM 44549 / YS-314 / AJ 12310 / JCM 11189 / NBRC 100395).